A 176-amino-acid polypeptide reads, in one-letter code: MEQATLGGGCFWCLEAVYQMVEGIESVVSGYAAGQTKNPDYRSVCSGTTGHAETVQITFDSKVISYFEILEIFWISHDPTTLNRQGNDVGIQYRSIIPYHSPEQKKQAEQSIQKAGEHFSDPIVTQVEILKEFYPAEDYHQNYFRTNPKQAYCHYVIKPKIDKYLKTGFKVKKEGS.

The active site involves cysteine 10.

This sequence belongs to the MsrA Met sulfoxide reductase family.

The enzyme catalyses L-methionyl-[protein] + [thioredoxin]-disulfide + H2O = L-methionyl-(S)-S-oxide-[protein] + [thioredoxin]-dithiol. It catalyses the reaction [thioredoxin]-disulfide + L-methionine + H2O = L-methionine (S)-S-oxide + [thioredoxin]-dithiol. Its function is as follows. Has an important function as a repair enzyme for proteins that have been inactivated by oxidation. Catalyzes the reversible oxidation-reduction of methionine sulfoxide in proteins to methionine. The chain is Peptide methionine sulfoxide reductase MsrA from Leptospira borgpetersenii serovar Hardjo-bovis (strain L550).